Consider the following 138-residue polypeptide: Large ribosomal subunit protein uL16 (138 aa).

This sequence belongs to the universal ribosomal protein uL16 family. As to quaternary structure, part of the 50S ribosomal subunit.

Binds 23S rRNA and is also seen to make contacts with the A and possibly P site tRNAs. The polypeptide is Large ribosomal subunit protein uL16 (Chlamydia pneumoniae (Chlamydophila pneumoniae)).